The sequence spans 415 residues: Zona pellucida-like domain-containing protein 1 (415 aa).

Positions 1–19 are cleaved as a signal peptide; that stretch reads MEPIWLLLLLAIFTVSVSA. The Extracellular portion of the chain corresponds to 20–372; the sequence is QFNGYNCDAN…QQFQINSVTS (353 aa). Residues 43–320 form the ZP domain; it reads YCGVQTITMK…PTCHNRDRRD (278 aa). Cystine bridges form between cysteine 44–cysteine 155, cysteine 79–cysteine 104, cysteine 235–cysteine 296, and cysteine 255–cysteine 313. Residues 373-393 form a helical membrane-spanning segment; sequence ALISGVVILGATSLSFFIIAL. Over 394–415 the chain is Cytoplasmic; the sequence is TLLNRKKQNSLVLCGIRNPVFN.

Post-translationally, proteolytically cleaved before the transmembrane segment to yield the secreted form found in the extracellular matrix of the cupula.

The protein localises to the cytoplasmic vesicle membrane. Its subcellular location is the secreted. The protein resides in the extracellular space. It localises to the extracellular matrix. Functionally, glycoprotein which is a component of the gelatinous extracellular matrix in the cupulae of the vestibular organ. The protein is Zona pellucida-like domain-containing protein 1 (zpld1) of Xenopus laevis (African clawed frog).